The following is a 141-amino-acid chain: ATP synthase epsilon chain (141 aa).

It belongs to the ATPase epsilon chain family. F-type ATPases have 2 components, CF(1) - the catalytic core - and CF(0) - the membrane proton channel. CF(1) has five subunits: alpha(3), beta(3), gamma(1), delta(1), epsilon(1). CF(0) has three main subunits: a, b and c.

It localises to the cell inner membrane. Functionally, produces ATP from ADP in the presence of a proton gradient across the membrane. This chain is ATP synthase epsilon chain, found in Methylobacillus flagellatus (strain ATCC 51484 / DSM 6875 / VKM B-1610 / KT).